Here is a 318-residue protein sequence, read N- to C-terminus: Beta-galactosidase small subunit (318 aa).

The protein belongs to the bacterial beta-galactosidase small subunit family. In terms of assembly, heterodimer of a large (LacL) and a small subunit (LacM).

It carries out the reaction Hydrolysis of terminal non-reducing beta-D-galactose residues in beta-D-galactosides.. Functionally, component of a beta-galactosidase. This is Beta-galactosidase small subunit from Lactobacillus helveticus (Lactobacillus suntoryeus).